Consider the following 254-residue polypeptide: Probable triosephosphate isomerase 2 (254 aa).

9 to 11 lines the substrate pocket; the sequence is NMK. The active-site Electrophile is H96. The Proton acceptor role is filled by E168. Substrate is bound by residues G174 and S212.

This sequence belongs to the triosephosphate isomerase family. In terms of assembly, homodimer.

It is found in the cytoplasm. The enzyme catalyses D-glyceraldehyde 3-phosphate = dihydroxyacetone phosphate. Its pathway is carbohydrate biosynthesis; gluconeogenesis. It participates in carbohydrate degradation; glycolysis; D-glyceraldehyde 3-phosphate from glycerone phosphate: step 1/1. Its function is as follows. Involved in the gluconeogenesis. Catalyzes stereospecifically the conversion of dihydroxyacetone phosphate (DHAP) to D-glyceraldehyde-3-phosphate (G3P). This Listeria monocytogenes serotype 4b (strain F2365) protein is Probable triosephosphate isomerase 2.